Reading from the N-terminus, the 118-residue chain is MKLRANRVGEQMKKELGDIISRKIKDPRVGFVTVTDVQVSGDLQIATVYISVLGDEEQKENTLKGLAKAKGFIRSEIGQRIRLRKTPEISFEFDESIGYGHRIDTLLHEINKEGKREE.

It belongs to the RbfA family. As to quaternary structure, monomer. Binds 30S ribosomal subunits, but not 50S ribosomal subunits or 70S ribosomes.

Its subcellular location is the cytoplasm. Its function is as follows. One of several proteins that assist in the late maturation steps of the functional core of the 30S ribosomal subunit. Associates with free 30S ribosomal subunits (but not with 30S subunits that are part of 70S ribosomes or polysomes). Required for efficient processing of 16S rRNA. May interact with the 5'-terminal helix region of 16S rRNA. The protein is Ribosome-binding factor A of Bacillus cereus (strain AH820).